The following is a 323-amino-acid chain: Glutathione synthetase (323 aa).

Residues 133-317 form the ATP-grasp domain; sequence KMYALQFQSV…IGDQTIAALE (185 aa). Residue 159–215 coordinates ATP; it reads LDELRAAVLKPLGGKAGEGILFLDPGDRNFNSLVEISTQQGQLPVMVQQYLPEAKDG. Mg(2+) contacts are provided by Glu-288 and Asn-290.

It belongs to the prokaryotic GSH synthase family. The cofactor is Mg(2+). Mn(2+) is required as a cofactor.

The enzyme catalyses gamma-L-glutamyl-L-cysteine + glycine + ATP = glutathione + ADP + phosphate + H(+). Its pathway is sulfur metabolism; glutathione biosynthesis; glutathione from L-cysteine and L-glutamate: step 2/2. The chain is Glutathione synthetase from Synechococcus elongatus (strain ATCC 33912 / PCC 7942 / FACHB-805) (Anacystis nidulans R2).